The chain runs to 832 residues: Translation initiation factor IF-2 (832 aa).

The tract at residues 1-249 is disordered; that stretch reads MSDDNDKPRT…GGGSSAPREK (249 aa). Pro residues predominate over residues 53–71; sequence TPAPAPEPAPEPAPAPAPA. Residues 89 to 144 show a composition bias toward basic and acidic residues; the sequence is PQERVARLQREAEEERLKLAEDARKRDDQKAKQNADDEKKRQEENKKAEEEAEKQA. Residues 145–156 are compositionally biased toward low complexity; it reads AAEAEAAAAAEA. Basic and acidic residues predominate over residues 180–200; it reads PEPKRPEKKKEEKKPARGGAK. The 171-residue stretch at 333-503 folds into the tr-type G domain; the sequence is PRPPVVTIMG…ELQAELLELK (171 aa). The G1 stretch occupies residues 342-349; the sequence is GHVDHGKT. Position 342-349 (342-349) interacts with GTP; it reads GHVDHGKT. The interval 367-371 is G2; sequence GITQH. The tract at residues 389–392 is G3; it reads DTPG. GTP contacts are provided by residues 389–393 and 443–446; these read DTPGH and NKCD. The tract at residues 443–446 is G4; the sequence is NKCD. Residues 479–481 are G5; the sequence is SAT.

It belongs to the TRAFAC class translation factor GTPase superfamily. Classic translation factor GTPase family. IF-2 subfamily.

Its subcellular location is the cytoplasm. In terms of biological role, one of the essential components for the initiation of protein synthesis. Protects formylmethionyl-tRNA from spontaneous hydrolysis and promotes its binding to the 30S ribosomal subunits. Also involved in the hydrolysis of GTP during the formation of the 70S ribosomal complex. The polypeptide is Translation initiation factor IF-2 (Erythrobacter litoralis (strain HTCC2594)).